Consider the following 432-residue polypeptide: Serine/threonine-protein phosphatase 2A activator 1 (432 aa).

Residues 322-432 are disordered; that stretch reads PYSKVEDEEP…MAPTKAPWAK (111 aa). The span at 366–389 shows a compositional bias: basic and acidic residues; the sequence is TVERLARRDGQRAAREKEEREDRA. Positions 396-412 are enriched in low complexity; the sequence is TTGAPGATALPPTRAPG.

Belongs to the PTPA-type PPIase family.

The protein resides in the cytoplasm. The protein localises to the nucleus. It carries out the reaction [protein]-peptidylproline (omega=180) = [protein]-peptidylproline (omega=0). In terms of biological role, PPIases accelerate the folding of proteins. It catalyzes the cis-trans isomerization of proline imidic peptide bonds in oligopeptides. Acts as a regulatory subunit for PP2A-like phosphatases modulating their activity or substrate specificity, probably by inducing a conformational change in the catalytic subunit, a direct target of the PPIase. Can reactivate inactive phosphatase PP2A-phosphatase methylesterase complexes (PP2Ai) in presence of ATP and Mg(2+) by dissociating the inactive form from the complex. This Yarrowia lipolytica (strain CLIB 122 / E 150) (Yeast) protein is Serine/threonine-protein phosphatase 2A activator 1 (RRD1).